Reading from the N-terminus, the 500-residue chain is AAA-ATPase At3g28580 (500 aa).

Residues 7–29 form a helical membrane-spanning segment; that stretch reads LWTNTGSALATLMFVYTIFKQFF. The segment at 174 to 193 is disordered; that stretch reads NRERKLYSNTPGQSHGNNSK. Residues 180–193 show a composition bias toward polar residues; sequence YSNTPGQSHGNNSK. 247–254 is an ATP binding site; that stretch reads GPPGTGKS. The tract at residues 462–500 is disordered; that stretch reads KEEAKKKVEEEEEEKQRKKEKVKEIEAEKEKKKKIEEEN.

Belongs to the AAA ATPase family. BCS1 subfamily. Requires Mg(2+) as cofactor.

It localises to the membrane. It carries out the reaction ATP + H2O = ADP + phosphate + H(+). This is AAA-ATPase At3g28580 from Arabidopsis thaliana (Mouse-ear cress).